A 206-amino-acid chain; its full sequence is Ribosomal RNA small subunit methyltransferase G (206 aa).

S-adenosyl-L-methionine is bound by residues G73, L78, 124–125, and R139; that span reads VE.

It belongs to the methyltransferase superfamily. RNA methyltransferase RsmG family.

The protein localises to the cytoplasm. The enzyme catalyses guanosine(527) in 16S rRNA + S-adenosyl-L-methionine = N(7)-methylguanosine(527) in 16S rRNA + S-adenosyl-L-homocysteine. Specifically methylates the N7 position of guanine in position 527 of 16S rRNA. This is Ribosomal RNA small subunit methyltransferase G from Serratia proteamaculans (strain 568).